We begin with the raw amino-acid sequence, 355 residues long: UDP-3-O-acylglucosamine N-acyltransferase (355 aa).

H252 (proton acceptor) is an active-site residue.

The protein belongs to the transferase hexapeptide repeat family. LpxD subfamily. Homotrimer.

The catalysed reaction is a UDP-3-O-[(3R)-3-hydroxyacyl]-alpha-D-glucosamine + a (3R)-hydroxyacyl-[ACP] = a UDP-2-N,3-O-bis[(3R)-3-hydroxyacyl]-alpha-D-glucosamine + holo-[ACP] + H(+). The protein operates within bacterial outer membrane biogenesis; LPS lipid A biosynthesis. Catalyzes the N-acylation of UDP-3-O-acylglucosamine using 3-hydroxyacyl-ACP as the acyl donor. Is involved in the biosynthesis of lipid A, a phosphorylated glycolipid that anchors the lipopolysaccharide to the outer membrane of the cell. This is UDP-3-O-acylglucosamine N-acyltransferase from Polynucleobacter asymbioticus (strain DSM 18221 / CIP 109841 / QLW-P1DMWA-1) (Polynucleobacter necessarius subsp. asymbioticus).